We begin with the raw amino-acid sequence, 132 residues long: Small ribosomal subunit protein uS11 (132 aa).

Residues 110–132 are disordered; the sequence is IEDVTPVPSDSTRRKGGRRGRRL. A compositionally biased stretch (basic residues) spans 123–132; sequence RKGGRRGRRL.

This sequence belongs to the universal ribosomal protein uS11 family. In terms of assembly, component of the small ribosomal subunit. Mature ribosomes consist of a small (40S) and a large (60S) subunit. The 40S subunit contains about 32 different proteins and 1 molecule of RNA (18S). The 60S subunit contains 45 different proteins and 3 molecules of RNA (25S, 5.8S and 5S).

It is found in the cytoplasm. Its function is as follows. Component of the ribosome, a large ribonucleoprotein complex responsible for the synthesis of proteins in the cell. The small ribosomal subunit (SSU) binds messenger RNAs (mRNAs) and translates the encoded message by selecting cognate aminoacyl-transfer RNA (tRNA) molecules. The large subunit (LSU) contains the ribosomal catalytic site termed the peptidyl transferase center (PTC), which catalyzes the formation of peptide bonds, thereby polymerizing the amino acids delivered by tRNAs into a polypeptide chain. The nascent polypeptides leave the ribosome through a tunnel in the LSU and interact with protein factors that function in enzymatic processing, targeting, and the membrane insertion of nascent chains at the exit of the ribosomal tunnel. RPS14B is involved in nucleolar processing of pre-18S ribosomal RNA and ribosome assembly. This Candida albicans (strain SC5314 / ATCC MYA-2876) (Yeast) protein is Small ribosomal subunit protein uS11 (RPS14B).